The sequence spans 431 residues: Serine--tRNA ligase (431 aa).

238-240 (TAE) contacts L-serine. 269 to 271 (RSE) contributes to the ATP binding site. Residue E292 coordinates L-serine. Position 356-359 (356-359 (EISS)) interacts with ATP. S392 is an L-serine binding site.

This sequence belongs to the class-II aminoacyl-tRNA synthetase family. Type-1 seryl-tRNA synthetase subfamily. Homodimer. The tRNA molecule binds across the dimer.

Its subcellular location is the cytoplasm. It carries out the reaction tRNA(Ser) + L-serine + ATP = L-seryl-tRNA(Ser) + AMP + diphosphate + H(+). The enzyme catalyses tRNA(Sec) + L-serine + ATP = L-seryl-tRNA(Sec) + AMP + diphosphate + H(+). Its pathway is aminoacyl-tRNA biosynthesis; selenocysteinyl-tRNA(Sec) biosynthesis; L-seryl-tRNA(Sec) from L-serine and tRNA(Sec): step 1/1. Functionally, catalyzes the attachment of serine to tRNA(Ser). Is also able to aminoacylate tRNA(Sec) with serine, to form the misacylated tRNA L-seryl-tRNA(Sec), which will be further converted into selenocysteinyl-tRNA(Sec). In Pectobacterium carotovorum subsp. carotovorum (strain PC1), this protein is Serine--tRNA ligase.